A 153-amino-acid chain; its full sequence is UPF0756 membrane protein lwe1581 (153 aa).

Helical transmembrane passes span 6–26, 54–74, 80–100, and 117–137; these read MLFL…SLII, WGVT…QIGF, SFKS…SILA, and LVFG…GPVI.

This sequence belongs to the UPF0756 family.

Its subcellular location is the cell membrane. The protein is UPF0756 membrane protein lwe1581 of Listeria welshimeri serovar 6b (strain ATCC 35897 / DSM 20650 / CCUG 15529 / CIP 8149 / NCTC 11857 / SLCC 5334 / V8).